The chain runs to 325 residues: Tetraacyldisaccharide 4'-kinase (325 aa).

55 to 62 (TAGGNGKT) contributes to the ATP binding site.

It belongs to the LpxK family.

It catalyses the reaction a lipid A disaccharide + ATP = a lipid IVA + ADP + H(+). Its pathway is glycolipid biosynthesis; lipid IV(A) biosynthesis; lipid IV(A) from (3R)-3-hydroxytetradecanoyl-[acyl-carrier-protein] and UDP-N-acetyl-alpha-D-glucosamine: step 6/6. Functionally, transfers the gamma-phosphate of ATP to the 4'-position of a tetraacyldisaccharide 1-phosphate intermediate (termed DS-1-P) to form tetraacyldisaccharide 1,4'-bis-phosphate (lipid IVA). In Salmonella heidelberg (strain SL476), this protein is Tetraacyldisaccharide 4'-kinase.